Reading from the N-terminus, the 415-residue chain is 26S proteasome regulatory subunit 6B (415 aa).

An ATP-binding site is contributed by 203 to 210 (GPPGCGKT).

Belongs to the AAA ATPase family.

Its subcellular location is the cytoplasm. It localises to the nucleus. In terms of biological role, the 26S proteasome is involved in the ATP-dependent degradation of ubiquitinated proteins. The regulatory (or ATPase) complex confers ATP dependency and substrate specificity to the 26S complex. The protein is 26S proteasome regulatory subunit 6B of Manduca sexta (Tobacco hawkmoth).